The sequence spans 198 residues: Ribosome maturation factor RimM (198 aa).

The segment at 1-21 (MPPPTASTPDDSADPGPDFAD) is disordered. Residues 122–195 (DDELFADDLV…RIVVRPIDGL (74 aa)) form the PRC barrel domain.

This sequence belongs to the RimM family. In terms of assembly, binds ribosomal protein uS19.

Its subcellular location is the cytoplasm. An accessory protein needed during the final step in the assembly of 30S ribosomal subunit, possibly for assembly of the head region. Essential for efficient processing of 16S rRNA. May be needed both before and after RbfA during the maturation of 16S rRNA. It has affinity for free ribosomal 30S subunits but not for 70S ribosomes. The protein is Ribosome maturation factor RimM of Salinibacter ruber (strain DSM 13855 / M31).